We begin with the raw amino-acid sequence, 479 residues long: Ribosomal RNA small subunit methyltransferase F (479 aa).

Residues 125 to 131, glutamate 149, aspartate 176, and aspartate 194 contribute to the S-adenosyl-L-methionine site; that span reads AAAPGSK. Cysteine 247 serves as the catalytic Nucleophile.

The protein belongs to the class I-like SAM-binding methyltransferase superfamily. RsmB/NOP family.

It is found in the cytoplasm. It carries out the reaction cytidine(1407) in 16S rRNA + S-adenosyl-L-methionine = 5-methylcytidine(1407) in 16S rRNA + S-adenosyl-L-homocysteine + H(+). Its function is as follows. Specifically methylates the cytosine at position 1407 (m5C1407) of 16S rRNA. The protein is Ribosomal RNA small subunit methyltransferase F of Escherichia coli (strain ATCC 8739 / DSM 1576 / NBRC 3972 / NCIMB 8545 / WDCM 00012 / Crooks).